The primary structure comprises 404 residues: Argininosuccinate synthase (404 aa).

ATP contacts are provided by residues 12-20 (AYSGGLDTS) and A39. L-citrulline is bound by residues Y91 and S96. An ATP-binding site is contributed by G121. Residues T123, N127, and D128 each contribute to the L-aspartate site. Position 127 (N127) interacts with L-citrulline. Residues R131, S180, S189, E265, and Y277 each coordinate L-citrulline.

This sequence belongs to the argininosuccinate synthase family. Type 1 subfamily. Homotetramer.

It is found in the cytoplasm. It carries out the reaction L-citrulline + L-aspartate + ATP = 2-(N(omega)-L-arginino)succinate + AMP + diphosphate + H(+). It participates in amino-acid biosynthesis; L-arginine biosynthesis; L-arginine from L-ornithine and carbamoyl phosphate: step 2/3. In Vibrio campbellii (strain ATCC BAA-1116), this protein is Argininosuccinate synthase.